The sequence spans 145 residues: 3-dehydroquinate dehydratase (145 aa).

Catalysis depends on Tyr-23, which acts as the Proton acceptor. Substrate-binding residues include Asn-73, His-79, and Asp-86. The active-site Proton donor is the His-99. Substrate-binding positions include 100 to 101 and Arg-110; that span reads LS.

This sequence belongs to the type-II 3-dehydroquinase family. In terms of assembly, homododecamer.

The enzyme catalyses 3-dehydroquinate = 3-dehydroshikimate + H2O. Its pathway is metabolic intermediate biosynthesis; chorismate biosynthesis; chorismate from D-erythrose 4-phosphate and phosphoenolpyruvate: step 3/7. In terms of biological role, catalyzes a trans-dehydration via an enolate intermediate. This chain is 3-dehydroquinate dehydratase, found in Desulfitobacterium hafniense (strain DSM 10664 / DCB-2).